A 285-amino-acid chain; its full sequence is 4-diphosphocytidyl-2-C-methyl-D-erythritol kinase (285 aa).

Residue Lys-12 is part of the active site. 94-104 (PAQAGMGGGSS) serves as a coordination point for ATP. Asp-136 is an active-site residue.

The protein belongs to the GHMP kinase family. IspE subfamily.

The enzyme catalyses 4-CDP-2-C-methyl-D-erythritol + ATP = 4-CDP-2-C-methyl-D-erythritol 2-phosphate + ADP + H(+). It participates in isoprenoid biosynthesis; isopentenyl diphosphate biosynthesis via DXP pathway; isopentenyl diphosphate from 1-deoxy-D-xylulose 5-phosphate: step 3/6. Its function is as follows. Catalyzes the phosphorylation of the position 2 hydroxy group of 4-diphosphocytidyl-2C-methyl-D-erythritol. This chain is 4-diphosphocytidyl-2-C-methyl-D-erythritol kinase, found in Paracidovorax citrulli (strain AAC00-1) (Acidovorax citrulli).